The following is a 74-amino-acid chain: Defensin (74 aa).

The N-terminal stretch at M1–A21 is a signal peptide. A propeptide spanning residues D22–V34 is cleaved from the precursor. Disulfide bonds link C40-C61, C47-C69, and C51-C71.

In terms of tissue distribution, expressed in the hemocytes, fat body and ovaries.

It localises to the secreted. Functionally, antibacterial peptide mostly active against Gram-positive bacteria. The chain is Defensin from Rhipicephalus microplus (Cattle tick).